We begin with the raw amino-acid sequence, 1144 residues long: PAN2-PAN3 deadenylation complex catalytic subunit PAN2 (1144 aa).

WD repeat units lie at residues 27–66, 153–193, 196–233, and 302–341; these read KKEK…YTRH, SSTY…VIHS, GHSA…NVYD, and HPCK…SGFT. Residues 344–481 form a linker region; that stretch reads AAVLEYQDYP…LLEYKPSNNI (138 aa). A USP domain is found at 482 to 887; that stretch reads DIPPAYSKLQ…TPEIVVYSDA (406 aa). An Exonuclease domain is found at 939-1110; the sequence is VALDAEFVSL…EDAHTALLLY (172 aa). A divalent metal cation contacts are provided by Asp-942, Glu-944, Asp-1051, and Asp-1102.

Belongs to the peptidase C19 family. PAN2 subfamily. As to quaternary structure, forms a heterotrimer with an asymmetric homodimer of the regulatory subunit PAN3 to form the poly(A)-nuclease (PAN) deadenylation complex. Requires a divalent metal cation as cofactor.

Its subcellular location is the cytoplasm. It catalyses the reaction Exonucleolytic cleavage of poly(A) to 5'-AMP.. Positively regulated by the regulatory subunit PAN3. Functionally, catalytic subunit of the poly(A)-nuclease (PAN) deadenylation complex, one of two cytoplasmic mRNA deadenylases involved in mRNA turnover. PAN specifically shortens poly(A) tails of RNA and the activity is stimulated by poly(A)-binding protein PAB1. PAN deadenylation is followed by rapid degradation of the shortened mRNA tails by the CCR4-NOT complex. Deadenylated mRNAs are then degraded by two alternative mechanisms, namely exosome-mediated 3'-5' exonucleolytic degradation, or deadenylation-dependent mRNA decaping and subsequent 5'-3' exonucleolytic degradation by XRN1. May also be involved in post-transcriptional maturation of mRNA poly(A) tails. In Kluyveromyces lactis (strain ATCC 8585 / CBS 2359 / DSM 70799 / NBRC 1267 / NRRL Y-1140 / WM37) (Yeast), this protein is PAN2-PAN3 deadenylation complex catalytic subunit PAN2.